A 637-amino-acid polypeptide reads, in one-letter code: 1-deoxy-D-xylulose-5-phosphate synthase 1 (637 aa).

Residues H74 and 115–117 (GHS) each bind thiamine diphosphate. D146 contributes to the Mg(2+) binding site. Thiamine diphosphate is bound by residues 147–148 (GS), N175, Y286, and E368. N175 is a binding site for Mg(2+).

The protein belongs to the transketolase family. DXPS subfamily. In terms of assembly, homodimer. Requires Mg(2+) as cofactor. It depends on thiamine diphosphate as a cofactor.

The catalysed reaction is D-glyceraldehyde 3-phosphate + pyruvate + H(+) = 1-deoxy-D-xylulose 5-phosphate + CO2. Its pathway is metabolic intermediate biosynthesis; 1-deoxy-D-xylulose 5-phosphate biosynthesis; 1-deoxy-D-xylulose 5-phosphate from D-glyceraldehyde 3-phosphate and pyruvate: step 1/1. In terms of biological role, catalyzes the acyloin condensation reaction between C atoms 2 and 3 of pyruvate and glyceraldehyde 3-phosphate to yield 1-deoxy-D-xylulose-5-phosphate (DXP). The chain is 1-deoxy-D-xylulose-5-phosphate synthase 1 from Geobacter sulfurreducens (strain ATCC 51573 / DSM 12127 / PCA).